We begin with the raw amino-acid sequence, 434 residues long: F-box/LRR-repeat protein 21 (434 aa).

Positions 39-85 (RLDWGSLPHRVVLCVFQYLPLIDRARASSVCRRWNEVFHIPDLWRKF) constitute an F-box domain. LRR repeat units lie at residues 140 to 165 (LVNC…SKSH), 187 to 213 (DTPV…KMSS), 214 to 239 (CPHV…ALNY), 242 to 265 (LSDE…RIDV), 322 to 347 (GRSV…VVCA), 349 to 374 (GIQV…GLSE), and 375 to 400 (CEVS…SIME).

As to quaternary structure, part of the SCF (SKP1-CUL1-F-box) E3 ubiquitin-protein ligase complex SCF(FBXL21) composed of CUL1, SKP1, RBX1 and FBXL21. Interacts with CRY2. Interacts with CRY1. In terms of tissue distribution, expressed in the adenohypophysis, hypothalamus (especially in the suprachiasmatic nucleus or nuclei, SCN) and pineal, all neuroendocrine structures associated with timing and homeostasis.

Its subcellular location is the cytoplasm. The protein localises to the cytosol. It is found in the nucleus. Its pathway is protein modification; protein ubiquitination. Its function is as follows. Substrate-recognition component of the SCF(FBXL21) E3 ubiquitin ligase complex involved in circadian rhythm function. Plays a key role in the maintenance of both the speed and the robustness of the circadian clock oscillation. The SCF(FBXL21) complex mainly acts in the cytosol and mediates ubiquitination of CRY proteins (CRY1 and CRY2), leading to CRY proteins stabilization. The SCF(FBXL21) complex counteracts the activity of the SCF(FBXL3) complex and protects CRY proteins from degradation. Involved in the hypothalamic suprachiasmatic nucleus (SCN) clock regulating temporal organization of the daily activities. The sequence is that of F-box/LRR-repeat protein 21 (Fbxl21) from Ovis aries (Sheep).